A 531-amino-acid polypeptide reads, in one-letter code: CTP synthase (531 aa).

The interval 1 to 264 is amidoligase domain; it reads MPKFVVVTGG…GDFLVERLRL (264 aa). Ser-13 is a binding site for CTP. Residue Ser-13 coordinates UTP. 14 to 19 contributes to the ATP binding site; the sequence is GLGKGV. Tyr-54 contacts L-glutamine. Residue Asp-71 coordinates ATP. Asp-71 and Glu-139 together coordinate Mg(2+). CTP is bound by residues 146 to 148, 185 to 190, and Lys-221; these read DYE and KTKPLQ. Residues 185–190 and Lys-221 each bind UTP; that span reads KTKPLQ. The Glutamine amidotransferase type-1 domain occupies 293–531; sequence CGKYVELPDA…LSAAVEQSRR (239 aa). Gly-351 is an L-glutamine binding site. Cys-378 acts as the Nucleophile; for glutamine hydrolysis in catalysis. L-glutamine-binding positions include 379-382, Glu-402, and Arg-459; that span reads FGMQ. Active-site residues include His-504 and Glu-506.

This sequence belongs to the CTP synthase family. Homotetramer.

The catalysed reaction is UTP + L-glutamine + ATP + H2O = CTP + L-glutamate + ADP + phosphate + 2 H(+). It carries out the reaction L-glutamine + H2O = L-glutamate + NH4(+). It catalyses the reaction UTP + NH4(+) + ATP = CTP + ADP + phosphate + 2 H(+). It functions in the pathway pyrimidine metabolism; CTP biosynthesis via de novo pathway; CTP from UDP: step 2/2. Allosterically activated by GTP, when glutamine is the substrate; GTP has no effect on the reaction when ammonia is the substrate. The allosteric effector GTP functions by stabilizing the protein conformation that binds the tetrahedral intermediate(s) formed during glutamine hydrolysis. Inhibited by the product CTP, via allosteric rather than competitive inhibition. In terms of biological role, catalyzes the ATP-dependent amination of UTP to CTP with either L-glutamine or ammonia as the source of nitrogen. Regulates intracellular CTP levels through interactions with the four ribonucleotide triphosphates. The chain is CTP synthase from Pyrobaculum calidifontis (strain DSM 21063 / JCM 11548 / VA1).